The following is a 211-amino-acid chain: DNA/RNA-binding protein ALBA2 (211 aa).

The span at 84–99 (NSGLKKNAKNEDKKSG) shows a compositional bias: basic and acidic residues. A disordered region spans residues 84–121 (NSGLKKNAKNEDKKSGDEEEEEEEEEEDEENNKNKEAN). Residues 100–113 (DEEEEEEEEEEDEE) are compositionally biased toward acidic residues.

The protein belongs to the histone-like Alba family. Identified in a TARE6-associated complex consisting of over 30 proteins and including ALBA1, ALBA2 and ALBA4; the complex binds to the non-coding subtelomeric repeat region TARE6.

The protein localises to the nucleus. Its subcellular location is the chromosome. It is found in the telomere. It localises to the cytoplasm. In terms of biological role, possesses DNA- and RNA-binding activities. Binds to DNA with relaxed sequence specificity. Associates with the subtelomeric TARE6 repeats. The chain is DNA/RNA-binding protein ALBA2 from Plasmodium falciparum (isolate 3D7).